Consider the following 138-residue polypeptide: Phosphoribosyl-AMP cyclohydrolase (138 aa).

Aspartate 84 is a Mg(2+) binding site. Cysteine 85 contacts Zn(2+). Aspartate 86 and aspartate 88 together coordinate Mg(2+). Zn(2+) contacts are provided by cysteine 102 and cysteine 109.

Belongs to the PRA-CH family. In terms of assembly, homodimer. The cofactor is Mg(2+). Zn(2+) is required as a cofactor.

It is found in the cytoplasm. The catalysed reaction is 1-(5-phospho-beta-D-ribosyl)-5'-AMP + H2O = 1-(5-phospho-beta-D-ribosyl)-5-[(5-phospho-beta-D-ribosylamino)methylideneamino]imidazole-4-carboxamide. The protein operates within amino-acid biosynthesis; L-histidine biosynthesis; L-histidine from 5-phospho-alpha-D-ribose 1-diphosphate: step 3/9. In terms of biological role, catalyzes the hydrolysis of the adenine ring of phosphoribosyl-AMP. In Burkholderia cenocepacia (strain ATCC BAA-245 / DSM 16553 / LMG 16656 / NCTC 13227 / J2315 / CF5610) (Burkholderia cepacia (strain J2315)), this protein is Phosphoribosyl-AMP cyclohydrolase.